Consider the following 445-residue polypeptide: Bifunctional protein GlmU (445 aa).

The segment at 1-218 (MRALVLAAGK…LLEITGVNTR (218 aa)) is pyrophosphorylase. Residues 6-9 (LAAG), Lys20, Gln69, 74-75 (GT), 96-98 (YGD), Gly134, Glu147, Asn162, and Asn216 each bind UDP-N-acetyl-alpha-D-glucosamine. Residue Asp98 participates in Mg(2+) binding. Asn216 is a Mg(2+) binding site. Residues 219–239 (KTLVWLEEQLRMRKIEELLEN) form a linker region. An N-acetyltransferase region spans residues 240 to 445 (GVTILDPATT…GWVLKKRKEE (206 aa)). Positions 321 and 339 each coordinate UDP-N-acetyl-alpha-D-glucosamine. The active-site Proton acceptor is His351. 2 residues coordinate UDP-N-acetyl-alpha-D-glucosamine: Tyr354 and Asn365. Acetyl-CoA contacts are provided by residues Ala368, 374–375 (NY), Ser393, Ala411, and Arg428.

This sequence in the N-terminal section; belongs to the N-acetylglucosamine-1-phosphate uridyltransferase family. It in the C-terminal section; belongs to the transferase hexapeptide repeat family. In terms of assembly, homotrimer. Mg(2+) is required as a cofactor.

It is found in the cytoplasm. The enzyme catalyses alpha-D-glucosamine 1-phosphate + acetyl-CoA = N-acetyl-alpha-D-glucosamine 1-phosphate + CoA + H(+). It carries out the reaction N-acetyl-alpha-D-glucosamine 1-phosphate + UTP + H(+) = UDP-N-acetyl-alpha-D-glucosamine + diphosphate. The protein operates within nucleotide-sugar biosynthesis; UDP-N-acetyl-alpha-D-glucosamine biosynthesis; N-acetyl-alpha-D-glucosamine 1-phosphate from alpha-D-glucosamine 6-phosphate (route II): step 2/2. It participates in nucleotide-sugar biosynthesis; UDP-N-acetyl-alpha-D-glucosamine biosynthesis; UDP-N-acetyl-alpha-D-glucosamine from N-acetyl-alpha-D-glucosamine 1-phosphate: step 1/1. Its pathway is bacterial outer membrane biogenesis; LPS lipid A biosynthesis. In terms of biological role, catalyzes the last two sequential reactions in the de novo biosynthetic pathway for UDP-N-acetylglucosamine (UDP-GlcNAc). The C-terminal domain catalyzes the transfer of acetyl group from acetyl coenzyme A to glucosamine-1-phosphate (GlcN-1-P) to produce N-acetylglucosamine-1-phosphate (GlcNAc-1-P), which is converted into UDP-GlcNAc by the transfer of uridine 5-monophosphate (from uridine 5-triphosphate), a reaction catalyzed by the N-terminal domain. This Thermotoga petrophila (strain ATCC BAA-488 / DSM 13995 / JCM 10881 / RKU-1) protein is Bifunctional protein GlmU.